Here is a 520-residue protein sequence, read N- to C-terminus: Dynein axonemal assembly factor 8 (520 aa).

Disordered stretches follow at residues 93-202 (PVLV…LRQE), 217-256 (RDACGPTSSDKGGVKEAPCHAAESAPRSKMPLVEPPEGPP), 328-366 (CARKVPADTPQDTKEADSGSRCASRKQGSQAGPGPQLAQ), and 388-520 (DHLS…LEQL). The segment covering 111-125 (RTKDASSQEGRDPGR) has biased composition (basic and acidic residues). Residue Ser-161 is modified to Phosphoserine. Ser-351 carries the post-translational modification Phosphoserine. Positions 401–410 (DSEEEEEEEM) are enriched in acidic residues. Positions 420–437 (SPSSLGLRTCTGKSQLLQ) are enriched in polar residues.

Expressed in respiratory ciliated cells (at protein level).

The protein localises to the dynein axonemal particle. It localises to the cytoplasm. In cyliated cells, dynein axonemal particle-specific protein required for deployment of ODA to the axoneme. Interacts with outer dynein arm (ODA) subunits. The protein is Dynein axonemal assembly factor 8 of Homo sapiens (Human).